Reading from the N-terminus, the 132-residue chain is Small ribosomal subunit protein uS8c (132 aa).

It belongs to the universal ribosomal protein uS8 family. As to quaternary structure, part of the 30S ribosomal subunit.

It localises to the plastid. The protein localises to the chloroplast. Functionally, one of the primary rRNA binding proteins, it binds directly to 16S rRNA central domain where it helps coordinate assembly of the platform of the 30S subunit. The protein is Small ribosomal subunit protein uS8c (rps8) of Staurastrum punctulatum (Green alga).